We begin with the raw amino-acid sequence, 222 residues long: Ribonuclease HII (222 aa).

Residues 32-222 (FHIAGVDEVG…LIKRYKEDIS (191 aa)) enclose the RNase H type-2 domain. Positions 38, 39, and 130 each coordinate a divalent metal cation.

The protein belongs to the RNase HII family. Mn(2+) serves as cofactor. The cofactor is Mg(2+).

The protein resides in the cytoplasm. The enzyme catalyses Endonucleolytic cleavage to 5'-phosphomonoester.. In terms of biological role, endonuclease that specifically degrades the RNA of RNA-DNA hybrids. The polypeptide is Ribonuclease HII (Bartonella bacilliformis (strain ATCC 35685 / KC583 / Herrer 020/F12,63)).